The primary structure comprises 962 residues: Putative primase C962R (962 aa).

In terms of domain architecture, SF3 helicase spans 607–775 (ELDARLWIMF…PDPGNPYEKK (169 aa)). 636–643 (GGGCNGKT) is a binding site for ATP.

This sequence belongs to the asfivirus helicase C962R family.

This African swine fever virus (strain Badajoz 1971 Vero-adapted) (Ba71V) protein is Putative primase C962R.